A 182-amino-acid polypeptide reads, in one-letter code: Lipoprotein signal peptidase (182 aa).

The next 4 membrane-spanning stretches (helical) occupy residues 12 to 32, 40 to 60, 70 to 90, and 97 to 117; these read FLWI…TVID, IQVL…AFSF, WFFT…LKQS, and LPVA…DRLV. Residues aspartate 123 and aspartate 141 contribute to the active site. Residues 136–156 traverse the membrane as a helical segment; that stretch reads AFNIADSAIFIGAALLIIDMF. A disordered region spans residues 161–182; sequence KKSEENGAESKAGSANSSETIK. The segment covering 173 to 182 has biased composition (polar residues); that stretch reads GSANSSETIK.

Belongs to the peptidase A8 family.

Its subcellular location is the cell inner membrane. It carries out the reaction Release of signal peptides from bacterial membrane prolipoproteins. Hydrolyzes -Xaa-Yaa-Zaa-|-(S,diacylglyceryl)Cys-, in which Xaa is hydrophobic (preferably Leu), and Yaa (Ala or Ser) and Zaa (Gly or Ala) have small, neutral side chains.. It participates in protein modification; lipoprotein biosynthesis (signal peptide cleavage). In terms of biological role, this protein specifically catalyzes the removal of signal peptides from prolipoproteins. This Alteromonas mediterranea (strain DSM 17117 / CIP 110805 / LMG 28347 / Deep ecotype) protein is Lipoprotein signal peptidase.